The chain runs to 258 residues: Electron transfer flavoprotein beta subunit lysine methyltransferase (258 aa).

Belongs to the methyltransferase superfamily. ETFBKMT family.

The protein resides in the cytoplasm. Its subcellular location is the mitochondrion matrix. The enzyme catalyses L-lysyl-[protein] + 3 S-adenosyl-L-methionine = N(6),N(6),N(6)-trimethyl-L-lysyl-[protein] + 3 S-adenosyl-L-homocysteine + 3 H(+). Protein-lysine methyltransferase that selectively trimethylates the flavoprotein ETFB in mitochondria. Thereby, may negatively regulate the function of ETFB in electron transfer from Acyl-CoA dehydrogenases to the main respiratory chain. This is Electron transfer flavoprotein beta subunit lysine methyltransferase from Danio rerio (Zebrafish).